Reading from the N-terminus, the 512-residue chain is D-alanine--D-alanyl carrier protein ligase (512 aa).

152-153 (TS) contributes to the ATP binding site. Asp199 lines the D-alanine pocket. 294-299 (NAYGPT) contacts ATP. D-alanine is bound at residue Val303. Residues Asp385, 397 to 400 (YGGR), and Lys499 each bind ATP. Residue Lys499 participates in D-alanine binding.

The protein belongs to the ATP-dependent AMP-binding enzyme family. DltA subfamily.

Its subcellular location is the cytoplasm. It catalyses the reaction holo-[D-alanyl-carrier protein] + D-alanine + ATP = D-alanyl-[D-alanyl-carrier protein] + AMP + diphosphate. It functions in the pathway cell wall biogenesis; lipoteichoic acid biosynthesis. In terms of biological role, catalyzes the first step in the D-alanylation of lipoteichoic acid (LTA), the activation of D-alanine and its transfer onto the D-alanyl carrier protein (Dcp) DltC. In an ATP-dependent two-step reaction, forms a high energy D-alanyl-AMP intermediate, followed by transfer of the D-alanyl residue as a thiol ester to the phosphopantheinyl prosthetic group of the Dcp. D-alanylation of LTA plays an important role in modulating the properties of the cell wall in Gram-positive bacteria, influencing the net charge of the cell wall. The polypeptide is D-alanine--D-alanyl carrier protein ligase (Streptococcus equi subsp. equi (strain 4047)).